The sequence spans 517 residues: General transcription factor IIF subunit 1 (517 aa).

Position 2 is an N-acetylalanine (alanine 2). At threonine 156 the chain carries Phosphothreonine. The interval 178–458 (QQRRLKDQDQ…SGDVQVTEDA (281 aa)) is disordered. Acidic residues predominate over residues 210-225 (LEDDLEMSSDDSEASG). Phosphoserine occurs at positions 217, 218, 221, and 224. A compositionally biased stretch (basic residues) spans 232 to 251 (PKAKKKAPPSKGGRKKKKKK). 2 stretches are compositionally biased toward acidic residues: residues 255–270 (DEAFEDSDDGDFEGQE) and 303–325 (EQSESSEESEEEKPPEEDKEEEE). Threonine 331 is subject to Phosphothreonine. The span at 343 to 355 (EESDSSEESDIDS) shows a compositional bias: acidic residues. A compositionally biased stretch (basic residues) spans 364–374 (AKKKTPPKRER). 4 positions are modified to phosphoserine: serine 377, serine 380, serine 381, and serine 385. Low complexity predominate over residues 377 to 391 (SGGSSRGNSRPGTPS). A Phosphothreonine modification is found at threonine 389. Phosphoserine is present on serine 391. Residues 392–401 (TEAGSTSSTL) are compositionally biased toward polar residues. At lysine 407 the chain carries N6-acetyllysine. Over residues 428–452 (GPQSLSGKSTPQPQSGKSTPSSGDV) the composition is skewed to polar residues. Serine 431, serine 433, and serine 436 each carry phosphoserine. Threonine 437 and threonine 446 each carry phosphothreonine. Position 449 is a phosphoserine (serine 449).

This sequence belongs to the TFIIF alpha subunit family. As to quaternary structure, heterodimer of an alpha and a beta subunit. Interacts with GTF2F2, CTDP1, TAF6/TAFII80 and URI1. Interacts with GTF2B (via C-terminus and preferentially via acetylated form); this interaction prevents binding of GTF2B to GTF2F2. Part of TBP-based Pol II pre-initiation complex (PIC), in which Pol II core assembles with general transcription factors and other specific initiation factors including GTF2E1, GTF2E2, GTF2F1, GTF2F2, TCEA1, ERCC2, ERCC3, GTF2H2, GTF2H3, GTF2H4, GTF2H5, GTF2A1, GTF2A2, GTF2B and TBP; this large multi-subunit PIC complex mediates DNA unwinding and targets Pol II core to the transcription start site where the first phosphodiester bond forms. Phosphorylated on Ser and other residues by TAF1 and casein kinase II-like kinases.

It localises to the nucleus. In terms of biological role, TFIIF is a general transcription initiation factor that binds to RNA polymerase II and helps to recruit it to the initiation complex in collaboration with TFIIB. It promotes transcription elongation. In Bos taurus (Bovine), this protein is General transcription factor IIF subunit 1 (GTF2F1).